The chain runs to 365 residues: tRNA-specific 2-thiouridylase MnmA (365 aa).

Residues 6–13 (AMSGGVDS) and L32 contribute to the ATP site. The Nucleophile role is filled by C101. C101 and C199 are joined by a disulfide. Position 125 (G125) interacts with ATP. The interaction with tRNA stretch occupies residues 149-151 (KDQ). C199 acts as the Cysteine persulfide intermediate in catalysis.

Belongs to the MnmA/TRMU family.

It localises to the cytoplasm. It catalyses the reaction S-sulfanyl-L-cysteinyl-[protein] + uridine(34) in tRNA + AH2 + ATP = 2-thiouridine(34) in tRNA + L-cysteinyl-[protein] + A + AMP + diphosphate + H(+). Catalyzes the 2-thiolation of uridine at the wobble position (U34) of tRNA, leading to the formation of s(2)U34. This chain is tRNA-specific 2-thiouridylase MnmA, found in Corynebacterium glutamicum (strain R).